The primary structure comprises 236 residues: Dolichol-phosphate mannosyltransferase (236 aa).

12 residues coordinate GDP-alpha-D-mannose: Pro9, Tyr11, Glu13, Ile40, Asp42, Asp95, Ala96, Asp97, Arg124, Val160, Arg211, and Lys217. Mg(2+) is bound at residue Asp97. Asp97 contributes to the Mn(2+) binding site.

Belongs to the glycosyltransferase 2 family. Component of the dolichol-phosphate mannose (DPM) synthase complex composed of dpm1, dpm2 and dpm3. It depends on Mg(2+) as a cofactor. The cofactor is Mn(2+). Ca(2+) is required as a cofactor.

The protein resides in the endoplasmic reticulum. The catalysed reaction is a di-trans,poly-cis-dolichyl phosphate + GDP-alpha-D-mannose = a di-trans,poly-cis-dolichyl beta-D-mannosyl phosphate + GDP. Its pathway is protein modification; protein glycosylation. In terms of biological role, transfers mannose from GDP-mannose to dolichol monophosphate to form dolichol phosphate mannose (Dol-P-Man) which is the mannosyl donor in pathways leading to N-glycosylation, glycosyl phosphatidylinositol membrane anchoring, and O-mannosylation of proteins. This is Dolichol-phosphate mannosyltransferase from Schizosaccharomyces pombe (strain 972 / ATCC 24843) (Fission yeast).